A 162-amino-acid polypeptide reads, in one-letter code: Caveolin-2 (162 aa).

Over 1-86 (MGLETEKADV…FEMSKYVIYK (86 aa)) the chain is Cytoplasmic. The residue at position 19 (Tyr-19) is a Phosphotyrosine; by SRC. Phosphoserine occurs at positions 20 and 23. Tyr-27 carries the phosphotyrosine; by SRC modification. Positions 87-107 (FLTVFLAIPLAFAAGILFATL) form an intramembrane region, helical. The Cytoplasmic portion of the chain corresponds to 108–162 (SCLHIWIIMPFVKTCLMVLPSVQTIWKSVTDVVIAPLCTSVGRSFSSVSLQLSHD).

Belongs to the caveolin family. Monomer or homodimer. Interacts with CAV1; the interaction forms a stable heterooligomeric complex that is required for targeting to lipid rafts and for caveolae formation. Tyrosine phosphorylated forms do not form heterooligomers with the Tyr-19-phosphorylated form existing as a monomer or dimer, and the Tyr-27-form as a monomer only. Interacts (tyrosine phosphorylated form) with the SH2 domain-containing proteins, RASA1, NCK1 and SRC. Interacts (tyrosine phosphorylated form) with INSR, the interaction (Tyr-27-phosphorylated form) is increased on insulin stimulation. Interacts (Tyr-19 phosphorylated form) with MAPK1 (phosphorylated form); the interaction, promoted by insulin, leads to nuclear location and MAPK1 activation. Interacts with STAT3; the interaction is increased on insulin-induced tyrosine phosphorylation leading to STAT activation. In terms of processing, phosphorylated on serine and tyrosine residues. CAV1 promotes phosphorylation on Ser-23 which then targets the complex to the plasma membrane, lipid rafts and caveolae. Phosphorylation on both Tyr-19 and Tyr-27 is required for insulin-induced 'Ser-727' phosphorylation of STAT3 and its activation. Phosphorylation on Tyr-19 is required for insulin-induced phosphorylation of MAPK1 and DNA binding of STAT3. Tyrosine phosphorylation is induced by both EGF and insulin.

It localises to the nucleus. It is found in the cytoplasm. The protein resides in the golgi apparatus membrane. The protein localises to the cell membrane. Its subcellular location is the membrane. It localises to the caveola. May act as a scaffolding protein within caveolar membranes. Interacts directly with G-protein alpha subunits and can functionally regulate their activity. Acts as an accessory protein in conjunction with CAV1 in targeting to lipid rafts and driving caveolae formation. Positive regulator of cellular mitogenesis of the MAPK signaling pathway. Required for the insulin-stimulated nuclear translocation and activation of MAPK1 and STAT3, and the subsequent regulation of cell cycle progression. The sequence is that of Caveolin-2 (CAV2) from Muntiacus muntjak (Barking deer).